The primary structure comprises 141 residues: Large ribosomal subunit protein uL16 (141 aa).

The disordered stretch occupies residues 1–23 (MLMPKRTKYRKQMKGRNRGKAHR).

Belongs to the universal ribosomal protein uL16 family. In terms of assembly, part of the 50S ribosomal subunit.

In terms of biological role, binds 23S rRNA and is also seen to make contacts with the A and possibly P site tRNAs. The sequence is that of Large ribosomal subunit protein uL16 from Helicobacter pylori (strain P12).